The chain runs to 90 residues: uncharacterized protein (90 aa).

The protein localises to the mitochondrion. This is an uncharacterized protein from Ascobolus immersus.